The chain runs to 256 residues: MILLLVLALGLAGASPLGEYKECPPHSRPWQVNLHDGKMSCSGALIDRWWIVTSFDCALTAHRTIATLGDHDLTVEEGTEQHIPVAEVIVHSPYRSPLHSLTMVRLAQPAQFNQHVQPVPLASRCPQPGEICSVSGWGSTRPNHFEPQQRLKCITVPVVDDQTCVNTFPQYLYWSQHMVCAGRADTDNCMSNRGSVMVCGGQLQGVQWFNHGCKDPAHPSVYSKMCLYNDWIHQVMARHPPFETTTVSTTTRGRKD.

A signal peptide spans 1–14 (MILLLVLALGLAGA). The region spanning 15–237 (SPLGEYKECP…YNDWIHQVMA (223 aa)) is the Peptidase S1 domain. Cystine bridges form between Cys-23–Cys-153, Cys-41–Cys-57, Cys-125–Cys-226, Cys-132–Cys-199, Cys-164–Cys-180, and Cys-189–Cys-213.

The protein belongs to the peptidase S1 family.

The chain is Trypsinogen-like protein 3 (trp3) from Pseudopleuronectes americanus (Winter flounder).